The following is a 257-amino-acid chain: Gene 18 protein (257 aa).

This sequence belongs to the herpesviridae UL79 family.

This Equus caballus (Horse) protein is Gene 18 protein (18).